The chain runs to 48 residues: Omega-agatoxin-Aa5a (48 aa).

4 cysteine pairs are disulfide-bonded: Cys3-Cys16, Cys10-Cys21, Cys15-Cys32, and Cys23-Cys30.

Belongs to the neurotoxin 02 (plectoxin) family. Expressed by the venom gland.

It localises to the secreted. In terms of biological role, the toxin blocks voltage-gated calcium channels in rat cerebellar granule cells (IC(50)=200 nM). This Agelenopsis aperta (North American funnel-web spider) protein is Omega-agatoxin-Aa5a.